We begin with the raw amino-acid sequence, 100 residues long: Aspartyl/glutamyl-tRNA(Asn/Gln) amidotransferase subunit C (100 aa).

This sequence belongs to the GatC family. Heterotrimer of A, B and C subunits.

The catalysed reaction is L-glutamyl-tRNA(Gln) + L-glutamine + ATP + H2O = L-glutaminyl-tRNA(Gln) + L-glutamate + ADP + phosphate + H(+). It catalyses the reaction L-aspartyl-tRNA(Asn) + L-glutamine + ATP + H2O = L-asparaginyl-tRNA(Asn) + L-glutamate + ADP + phosphate + 2 H(+). In terms of biological role, allows the formation of correctly charged Asn-tRNA(Asn) or Gln-tRNA(Gln) through the transamidation of misacylated Asp-tRNA(Asn) or Glu-tRNA(Gln) in organisms which lack either or both of asparaginyl-tRNA or glutaminyl-tRNA synthetases. The reaction takes place in the presence of glutamine and ATP through an activated phospho-Asp-tRNA(Asn) or phospho-Glu-tRNA(Gln). The polypeptide is Aspartyl/glutamyl-tRNA(Asn/Gln) amidotransferase subunit C (Streptococcus gordonii (strain Challis / ATCC 35105 / BCRC 15272 / CH1 / DL1 / V288)).